The chain runs to 520 residues: Keratin, type II cytoskeletal 72 (520 aa).

The tract at residues 1–133 (MSRQLTLYPG…DPEIQKVRAQ (133 aa)) is head. Positions 134 to 169 (EREQIKALNNKFASFIDKVRFLEQQNQVLETKWELL) are coil 1A. The region spanning 134 to 447 (EREQIKALNN…KLLESEESRM (314 aa)) is the IF rod domain. Positions 170-188 (QQLDQNNSRRSLEPVHESY) are linker 1. Residues 189–280 (ISNLQKQLEI…VLFEGEIAQM (92 aa)) are coil 1B. The tract at residues 281–304 (QSHISDTSVILSMDNNRQLDLDSI) is linker 12. Residues 305–443 (LAEVRAQYEE…ATYRKLLESE (139 aa)) are coil 2. Positions 444 to 520 (ESRMAGEYPS…SSCVSKKASR (77 aa)) are tail. The tract at residues 495–520 (GSCGSELKDPPAKTSASSCVSKKASR) is disordered.

It belongs to the intermediate filament family. As to quaternary structure, heterotetramer of two type I and two type II keratins.

In terms of biological role, has a role in hair formation. Specific component of keratin intermediate filaments in the inner root sheath (IRS) of the hair follicle. The protein is Keratin, type II cytoskeletal 72 (Krt72) of Rattus norvegicus (Rat).